The following is a 479-amino-acid chain: Sodium-coupled neutral amino acid transporter 5 (479 aa).

Residues 1–61 (MAISCAVGME…LDFEGKTSFG (61 aa)) are Cytoplasmic-facing. The helical transmembrane segment at 62-84 (MSVFNLSNAIMGSGILGLAYAMA) threads the bilayer. Over 85–97 (HTGVIFFLALLLC) the chain is Extracellular. The helical transmembrane segment at 98–118 (IALLSSYSIHLLLTCASVVGI) threads the bilayer. The Cytoplasmic segment spans residues 119-135 (RAYEQLGQRAFGPAGKV). A helical transmembrane segment spans residues 136 to 156 (VVAIIICLHNVGAMSSYLFII). Topologically, residues 157–176 (KSELPLVIGTFLHMDPEGDW) are extracellular. A helical membrane pass occupies residues 177 to 197 (FLKGNLLIILVSLLIILPLAL). The Cytoplasmic portion of the chain corresponds to 198 to 202 (MKHLG). The helical transmembrane segment at 203 to 223 (YLGYTSSLSLTCMLFFLISVI) threads the bilayer. Residues 224-264 (YKKFQIGCDVSHNDTVVEAEQAPLQAFNSSCEAELFTVDSQ) lie on the Extracellular side of the membrane. Cys231 and Cys254 are oxidised to a cystine. Asn236 carries N-linked (GlcNAc...) asparagine glycosylation. A helical membrane pass occupies residues 265 to 285 (MSYTVPIMAFAFVCHPEVLPI). Residues 286–302 (YTELCRPTQRRMQAVAN) lie on the Cytoplasmic side of the membrane. Residues 303-323 (MSIGAMFIMYGLTATFGYLTF) form a helical membrane-spanning segment. Over 324 to 341 (YSTVKAEMLEMYTQEDML) the chain is Extracellular. Residues 342-362 (ILCVRLAVLLAVTLTVPVVLF) traverse the membrane as a helical segment. Topologically, residues 363 to 383 (PIRRALQQLLFPSKAFSWLRH) are cytoplasmic. Residues 384 to 404 (VAIALILLILVNILVICVPTI) traverse the membrane as a helical segment. The Extracellular segment spans residues 405-406 (RD). A helical transmembrane segment spans residues 407 to 427 (IFGFIGSTSAPSLIFILPSVF). At 428 to 446 (YLRIVPTEVEPLFSWPKIQ) the chain is on the cytoplasmic side. Residues 447–467 (ALCFGVLGVLFMAISLGFMFA) form a helical membrane-spanning segment. Over 468–479 (NWATGQSRMSGH) the chain is Extracellular.

It belongs to the amino acid/polyamine transporter 2 family. In terms of tissue distribution, expressed in the ganglion cell layer and the nerve fiber layer (at protein level). Also expreseed in the cells of the inner nuclear layer and in the inner plexiform layer (at protein level). Expressed in Mueller and ganglion retinal cell.

It localises to the cell membrane. The catalysed reaction is L-glutamine(out) + Na(+)(out) + H(+)(in) = L-glutamine(in) + Na(+)(in) + H(+)(out). It catalyses the reaction L-serine(out) + Na(+)(out) + H(+)(in) = L-serine(in) + Na(+)(in) + H(+)(out). It carries out the reaction L-alanine(out) + Na(+)(out) + H(+)(in) = L-alanine(in) + Na(+)(in) + H(+)(out). The enzyme catalyses glycine(out) + Na(+)(out) + H(+)(in) = glycine(in) + Na(+)(in) + H(+)(out). The catalysed reaction is L-asparagine(out) + Na(+)(out) + H(+)(in) = L-asparagine(in) + Na(+)(in) + H(+)(out). It catalyses the reaction L-histidine(out) + Na(+)(out) + H(+)(in) = L-histidine(in) + Na(+)(in) + H(+)(out). It carries out the reaction L-cysteine(out) + Na(+)(out) + H(+)(in) = L-cysteine(in) + Na(+)(in) + H(+)(out). With respect to regulation, not inhibited by lithium. Partial allosteric regulation on ions sodium binding. Its function is as follows. Symporter that cotransports neutral amino acids and sodium ions, coupled to an H(+) antiporter activity. Releases L-glutamine and glycine from astroglial cells and may participate in the glutamate/GABA-L-glutamine cycle and the NMDA receptors activation. In addition, contributes significantly to L-glutamine uptake in retina, namely in ganglion and Mueller cells therefore, participates in the retinal glutamate-glutamine cycle. The transport activity is pH sensitive, Li(+) tolerant, bidirectional and associated with large uncoupled fluxes of protons. Moreover functions in both direction and is associated with large uncoupled fluxes of protons. The transport is electroneutral coupled to the cotransport of 1 Na(+) and the antiport of 1 H(+). May have a particular importance for modulation of net hepatic glutamine flux. The polypeptide is Sodium-coupled neutral amino acid transporter 5 (Mus musculus (Mouse)).